The primary structure comprises 248 residues: 2,3-bisphosphoglycerate-dependent phosphoglycerate mutase (248 aa).

Substrate-binding positions include 8–15 (RHGESTWN), 21–22 (TG), Arg60, 87–90 (ERHY), Lys98, 114–115 (RR), and 183–184 (GN). His9 (tele-phosphohistidine intermediate) is an active-site residue. Catalysis depends on Glu87, which acts as the Proton donor/acceptor.

This sequence belongs to the phosphoglycerate mutase family. BPG-dependent PGAM subfamily. Homodimer.

It carries out the reaction (2R)-2-phosphoglycerate = (2R)-3-phosphoglycerate. It functions in the pathway carbohydrate degradation; glycolysis; pyruvate from D-glyceraldehyde 3-phosphate: step 3/5. In terms of biological role, catalyzes the interconversion of 2-phosphoglycerate and 3-phosphoglycerate. The sequence is that of 2,3-bisphosphoglycerate-dependent phosphoglycerate mutase from Burkholderia cenocepacia (strain ATCC BAA-245 / DSM 16553 / LMG 16656 / NCTC 13227 / J2315 / CF5610) (Burkholderia cepacia (strain J2315)).